Here is a 137-residue protein sequence, read N- to C-terminus: Small ribosomal subunit protein uS12 (137 aa).

The interval 1-57 (MPTINQLVRKPRQSKSKKSDSPVLNRGFNSKKKQFTNLNSPQKRGVCTRVGTMTPRK) is disordered. Asp102 is modified (3-methylthioaspartic acid). The segment at 118 to 137 (SGVDGRRQGRSLYGTKKPKN) is disordered.

Belongs to the universal ribosomal protein uS12 family. As to quaternary structure, part of the 30S ribosomal subunit. Contacts proteins S8 and S17. May interact with IF1 in the 30S initiation complex.

Functionally, with S4 and S5 plays an important role in translational accuracy. Interacts with and stabilizes bases of the 16S rRNA that are involved in tRNA selection in the A site and with the mRNA backbone. Located at the interface of the 30S and 50S subunits, it traverses the body of the 30S subunit contacting proteins on the other side and probably holding the rRNA structure together. The combined cluster of proteins S8, S12 and S17 appears to hold together the shoulder and platform of the 30S subunit. This is Small ribosomal subunit protein uS12 from Staphylococcus haemolyticus (strain JCSC1435).